Here is a 253-residue protein sequence, read N- to C-terminus: Imidazole glycerol phosphate synthase subunit HisF (253 aa).

Residues D11 and D130 contribute to the active site.

The protein belongs to the HisA/HisF family. Heterodimer of HisH and HisF.

The protein resides in the cytoplasm. It carries out the reaction 5-[(5-phospho-1-deoxy-D-ribulos-1-ylimino)methylamino]-1-(5-phospho-beta-D-ribosyl)imidazole-4-carboxamide + L-glutamine = D-erythro-1-(imidazol-4-yl)glycerol 3-phosphate + 5-amino-1-(5-phospho-beta-D-ribosyl)imidazole-4-carboxamide + L-glutamate + H(+). It participates in amino-acid biosynthesis; L-histidine biosynthesis; L-histidine from 5-phospho-alpha-D-ribose 1-diphosphate: step 5/9. Functionally, IGPS catalyzes the conversion of PRFAR and glutamine to IGP, AICAR and glutamate. The HisF subunit catalyzes the cyclization activity that produces IGP and AICAR from PRFAR using the ammonia provided by the HisH subunit. The chain is Imidazole glycerol phosphate synthase subunit HisF from Dehalococcoides mccartyi (strain CBDB1).